The primary structure comprises 334 residues: Magnesium-chelatase 38 kDa subunit (334 aa).

Residue 36–43 coordinates ATP; that stretch reads GDRGTGKS.

It belongs to the Mg-chelatase subunits D/I family.

The catalysed reaction is protoporphyrin IX + Mg(2+) + ATP + H2O = Mg-protoporphyrin IX + ADP + phosphate + 3 H(+). Its pathway is porphyrin-containing compound metabolism; bacteriochlorophyll biosynthesis. Functionally, involved in bacteriochlorophyll biosynthesis; introduces a magnesium ion into protoporphyrin IX to yield Mg-protoporphyrin IX. The polypeptide is Magnesium-chelatase 38 kDa subunit (bchI) (Cereibacter sphaeroides (strain ATCC 17023 / DSM 158 / JCM 6121 / CCUG 31486 / LMG 2827 / NBRC 12203 / NCIMB 8253 / ATH 2.4.1.) (Rhodobacter sphaeroides)).